A 513-amino-acid polypeptide reads, in one-letter code: Acetylcholine receptor subunit delta (513 aa).

The first 18 residues, 1–18 (MAVLLALFGALVLSGGLC), serve as a signal peptide directing secretion. The Extracellular segment spans residues 19 to 244 (VNQEERLIHH…ITFYLIIKRK (226 aa)). N-linked (GlcNAc...) asparagine glycosylation is found at N88 and N161. Cysteines 148 and 162 form a disulfide. The next 3 membrane-spanning stretches (helical) occupy residues 245–269 (PLFYVINIVTPCVLIAFMAILVFYL), 277–295 (MTLVISVLLAQSVFLLLVS), and 311–332 (YLLFIMLLVTAVVVICVVVLNF). Residues 333-467 (HFRTPSTHVM…WNRVARTLDR (135 aa)) are Cytoplasmic-facing. Y388 is subject to Phosphotyrosine; by Tyr-kinases. Residues 468–490 (LCLFLITPMLVVGTLWIFLMGIY) form a helical membrane-spanning segment.

Belongs to the ligand-gated ion channel (TC 1.A.9) family. Acetylcholine receptor (TC 1.A.9.1) subfamily. As to quaternary structure, pentamer of two alpha chains, and one each of the beta, delta, and gamma chains.

The protein resides in the postsynaptic cell membrane. It is found in the cell membrane. The enzyme catalyses K(+)(in) = K(+)(out). It catalyses the reaction Na(+)(in) = Na(+)(out). Functionally, after binding acetylcholine, the AChR responds by an extensive change in conformation that affects all subunits and leads to opening of an ion-conducting channel across the plasma membrane. The polypeptide is Acetylcholine receptor subunit delta (CHRND) (Gallus gallus (Chicken)).